Here is a 397-residue protein sequence, read N- to C-terminus: Alanine racemase, biosynthetic (397 aa).

The Proton acceptor; specific for D-alanine role is filled by Lys-42. Lys-42 is subject to N6-(pyridoxal phosphate)lysine. A substrate-binding site is contributed by Arg-136. Tyr-257 acts as the Proton acceptor; specific for L-alanine in catalysis. Met-305 contacts substrate. Residues 373–397 (ANRPTEAMSNPSRAKSRPMDKQALI) form a disordered region.

The protein belongs to the alanine racemase family. It depends on pyridoxal 5'-phosphate as a cofactor.

It carries out the reaction L-alanine = D-alanine. Its pathway is amino-acid biosynthesis; D-alanine biosynthesis; D-alanine from L-alanine: step 1/1. It participates in cell wall biogenesis; peptidoglycan biosynthesis. Catalyzes the interconversion of L-alanine and D-alanine. Provides the D-alanine required for cell wall biosynthesis. The protein is Alanine racemase, biosynthetic (alr) of Mesorhizobium japonicum (strain LMG 29417 / CECT 9101 / MAFF 303099) (Mesorhizobium loti (strain MAFF 303099)).